The following is a 554-amino-acid chain: Phenylalanine--tRNA ligase beta subunit (554 aa).

In terms of domain architecture, B5 spans 276-351 (LTPKSRIISV…INYGYEKFDG (76 aa)). Residues aspartate 329, aspartate 335, glutamate 338, and glutamate 339 each contribute to the Mg(2+) site.

This sequence belongs to the phenylalanyl-tRNA synthetase beta subunit family. Type 2 subfamily. In terms of assembly, tetramer of two alpha and two beta subunits. The cofactor is Mg(2+).

Its subcellular location is the cytoplasm. The catalysed reaction is tRNA(Phe) + L-phenylalanine + ATP = L-phenylalanyl-tRNA(Phe) + AMP + diphosphate + H(+). The protein is Phenylalanine--tRNA ligase beta subunit of Methanococcus maripaludis (strain DSM 14266 / JCM 13030 / NBRC 101832 / S2 / LL).